The primary structure comprises 337 residues: UDP-3-O-acylglucosamine N-acyltransferase (337 aa).

The active-site Proton acceptor is the H238.

It belongs to the transferase hexapeptide repeat family. LpxD subfamily. In terms of assembly, homotrimer.

The enzyme catalyses a UDP-3-O-[(3R)-3-hydroxyacyl]-alpha-D-glucosamine + a (3R)-hydroxyacyl-[ACP] = a UDP-2-N,3-O-bis[(3R)-3-hydroxyacyl]-alpha-D-glucosamine + holo-[ACP] + H(+). It functions in the pathway bacterial outer membrane biogenesis; LPS lipid A biosynthesis. Functionally, catalyzes the N-acylation of UDP-3-O-acylglucosamine using 3-hydroxyacyl-ACP as the acyl donor. Is involved in the biosynthesis of lipid A, a phosphorylated glycolipid that anchors the lipopolysaccharide to the outer membrane of the cell. The polypeptide is UDP-3-O-acylglucosamine N-acyltransferase (Xanthomonas oryzae pv. oryzae (strain MAFF 311018)).